Reading from the N-terminus, the 423-residue chain is MSEVDEGIQNLSIEKADAGATATATATATTAEKHNQALNSTLKTGLDKSVESQTANSAGSSPTSATSSSNNPHYDVKSTIKSTKLNDEQAQKLTKLISSVPDILKQTKNPAYDEIFGYRINSDGLEYVDIPKRNEILLKFLAADNYDLDLATKRLIATFNWRNEFQPLHAAFDEKFHQELNELGVITQFASGNDNLHVITWNLYGNLKSPKKIFQKFGEGADDGQREGLAKSSSNSNSSSSSSSSGNNRGKNLPGSQFLRWRIGLMEKALQLVDFTDSKNHKIAQIHDYNNVSMFRIDPGMKAATKEIIEIFGQNYPELLSTKYFINVPLIMGWVFTFFKTIGVISAETLKKFQVLNHGDLKETLPKQELPESYGGVKSAKGDPKRSLFDLDVSESIKLTKYGQVVLQRLGDEEIAHNNDEVE.

Residues 1 to 76 are disordered; it reads MSEVDEGIQN…SSSNNPHYDV (76 aa). Low complexity-rich tracts occupy residues 20-30 and 54-72; these read ATATATATATT and TANS…SNNP. Residue tyrosine 204 coordinates heme. One can recognise a CRAL-TRIO domain in the interval 217 to 382; sequence FGEGADDGQR…SYGGVKSAKG (166 aa). The disordered stretch occupies residues 221-253; sequence ADDGQREGLAKSSSNSNSSSSSSSSGNNRGKNL. Over residues 232–248 the composition is skewed to low complexity; that stretch reads SSSNSNSSSSSSSSGNN. Heme contacts are provided by arginine 262, histidine 287, tyrosine 289, and lysine 323.

This sequence belongs to the SFH5 family. The cofactor is heme b.

Its subcellular location is the cytoplasm. It localises to the endoplasmic reticulum membrane. It is found in the microsome membrane. It carries out the reaction a 1,2-diacyl-sn-glycero-3-phospho-(1D-myo-inositol)(in) = a 1,2-diacyl-sn-glycero-3-phospho-(1D-myo-inositol)(out). In terms of biological role, non-classical phosphatidylinositol (PtdIns) transfer protein (PITP), which exhibits PtdIns-binding/transfer activity in the absence of detectable PtdCho-binding/transfer activity. Regulates PtdIns(4,5)P2 homeostasis at the plasma membrane. Heme-binding protein that may play a role in organic oxidant-induced stress responses. This is Phosphatidylinositol transfer protein SFH5 (SFH5) from Lodderomyces elongisporus (strain ATCC 11503 / CBS 2605 / JCM 1781 / NBRC 1676 / NRRL YB-4239) (Yeast).